Here is a 261-residue protein sequence, read N- to C-terminus: Cytochrome c oxidase subunit 3 (261 aa).

Over 1–15 (MAHQAHAYHMVDPSP) the chain is Mitochondrial matrix. A helical transmembrane segment spans residues 16–34 (WPLTGAIAALLLTSGTAVW). The Mitochondrial intermembrane portion of the chain corresponds to 35 to 40 (FHFHSL). A helical transmembrane segment spans residues 41–66 (TLLTLGNVLLLLTMYQWWRDIIREGT). At 67–72 (FQGHHT) the chain is on the mitochondrial matrix side. The helical transmembrane segment at 73 to 105 (PPVQKGLRYGMILFITSEVFFFLGFFWAFYHAS) threads the bilayer. At 106–128 (LAPTPELGGCWPPTGITTLDPFE) the chain is on the mitochondrial intermembrane side. Residues 129 to 152 (VPLLNTAVLLASGVTVTWAHHSIM) form a helical membrane-spanning segment. Topologically, residues 153–155 (EGE) are mitochondrial matrix. A helical membrane pass occupies residues 156–183 (RKQTIQALTLTILLGFYFTFLQGMEYYE). Residues 184-190 (APFTIAD) are Mitochondrial intermembrane-facing. The chain crosses the membrane as a helical span at residues 191 to 223 (GVYGSTFFVATGFHGLHVIIGSTFLAVCLLRQV). Residues 224–232 (QYHFTSEHH) lie on the Mitochondrial matrix side of the membrane. A helical membrane pass occupies residues 233-256 (FGFEAAAWYWHFVDVVWLFLYVSI). Residues 257-261 (YWWGS) are Mitochondrial intermembrane-facing.

The protein belongs to the cytochrome c oxidase subunit 3 family. As to quaternary structure, component of the cytochrome c oxidase (complex IV, CIV), a multisubunit enzyme composed of 14 subunits. The complex is composed of a catalytic core of 3 subunits MT-CO1, MT-CO2 and MT-CO3, encoded in the mitochondrial DNA, and 11 supernumerary subunits COX4I, COX5A, COX5B, COX6A, COX6B, COX6C, COX7A, COX7B, COX7C, COX8 and NDUFA4, which are encoded in the nuclear genome. The complex exists as a monomer or a dimer and forms supercomplexes (SCs) in the inner mitochondrial membrane with NADH-ubiquinone oxidoreductase (complex I, CI) and ubiquinol-cytochrome c oxidoreductase (cytochrome b-c1 complex, complex III, CIII), resulting in different assemblies (supercomplex SCI(1)III(2)IV(1) and megacomplex MCI(2)III(2)IV(2)).

Its subcellular location is the mitochondrion inner membrane. The catalysed reaction is 4 Fe(II)-[cytochrome c] + O2 + 8 H(+)(in) = 4 Fe(III)-[cytochrome c] + 2 H2O + 4 H(+)(out). Functionally, component of the cytochrome c oxidase, the last enzyme in the mitochondrial electron transport chain which drives oxidative phosphorylation. The respiratory chain contains 3 multisubunit complexes succinate dehydrogenase (complex II, CII), ubiquinol-cytochrome c oxidoreductase (cytochrome b-c1 complex, complex III, CIII) and cytochrome c oxidase (complex IV, CIV), that cooperate to transfer electrons derived from NADH and succinate to molecular oxygen, creating an electrochemical gradient over the inner membrane that drives transmembrane transport and the ATP synthase. Cytochrome c oxidase is the component of the respiratory chain that catalyzes the reduction of oxygen to water. Electrons originating from reduced cytochrome c in the intermembrane space (IMS) are transferred via the dinuclear copper A center (CU(A)) of subunit 2 and heme A of subunit 1 to the active site in subunit 1, a binuclear center (BNC) formed by heme A3 and copper B (CU(B)). The BNC reduces molecular oxygen to 2 water molecules using 4 electrons from cytochrome c in the IMS and 4 protons from the mitochondrial matrix. The sequence is that of Cytochrome c oxidase subunit 3 (mt-co3) from Oncorhynchus masou (Cherry salmon).